The sequence spans 806 residues: Integrin beta-7 (806 aa).

Residues 1–19 form the signal peptide; the sequence is MVDSSTVLIFLLVLGGGQS. Residues 20–724 lie on the Extracellular side of the membrane; it reads ELDTKITSSG…PQEKGVDHTR (705 aa). The PSI domain maps to 44–92; the sequence is SCQPVPSCQKCILSHPSCAWCKQLNFTASGEAEARRCARREELLARGCP. 26 disulfide bridges follow: C51/C476, C54/C80, C64/C91, C216/C223, C271/C311, C412/C428, C448/C474, C478/C497, C488/C500, C502/C511, C513/C545, C527/C543, C537/C548, C550/C559, C561/C582, C566/C580, C574/C585, C587/C596, C598/C621, C605/C619, C613/C624, C626/C635, C638/C641, C645/C688, C651/C670, and C654/C666. A glycan (N-linked (GlcNAc...) asparagine) is linked at N68. Residues 98–107 are compositionally biased toward basic and acidic residues; sequence EPRGRQEVLQ. Positions 98–123 are disordered; that stretch reads EPRGRQEVLQDKPLSQGDRGEGATQL. The VWFA domain occupies 150-389; sequence YPVDLYYLMD…QLIMDAYDSL (240 aa). Positions 161 and 163 each coordinate Mg(2+). 4 residues coordinate Ca(2+): S163, D166, D167, and D198. N250 is a glycosylation site (N-linked (GlcNAc...) asparagine). N254, D256, P258, and E259 together coordinate Ca(2+). E259 lines the Mg(2+) pocket. N279 carries an N-linked (GlcNAc...) asparagine glycan. Residues D289 and E373 each coordinate Ca(2+). Residue N434 is glycosylated (N-linked (GlcNAc...) asparagine). I-EGF domains follow at residues 478-512, 513-560, 561-597, and 598-636; these read CGDA…QLCE, CSEA…RLCE, CDDA…RACE, and CSKS…ALCD. The N-linked (GlcNAc...) asparagine glycan is linked to N531. Residue N590 is glycosylated (N-linked (GlcNAc...) asparagine). N665 and N674 each carry an N-linked (GlcNAc...) asparagine glycan. Residues 725–745 form a helical membrane-spanning segment; sequence AIILGCTGGIVAVGLGLVLAY. At 746 to 806 the chain is on the cytoplasmic side; the sequence is RLSVEIYDRR…PSLSLTREAD (61 aa). The tract at residues 786-806 is disordered; sequence NPRFQGTNGRSPSLSLTREAD.

Belongs to the integrin beta chain family. Heterodimer of an alpha and a beta subunit. ITGB7/beta-7 associates with either ITGA4/alpha-4 or ITGAE/alpha-E. Integrin ITGA4/ITGB7 interacts with MADCAM1. Integrin ITGA4/ITGB7 interacts with VCAM1 and fibronectin. Interacts with FLNA (via filamin repeats 4, 9, 12, 17, 19, 21, and 23).

The protein resides in the cell membrane. Integrin ITGA4/ITGB7 (alpha-4/beta-7) (Peyer patches-specific homing receptor LPAM-1) is an adhesion molecule that mediates lymphocyte migration and homing to gut-associated lymphoid tissue (GALT). Integrin ITGA4/ITGB7 interacts with the cell surface adhesion molecules MADCAM1 which is normally expressed by the vascular endothelium of the gastrointestinal tract. Also interacts with VCAM1 and fibronectin, an extracellular matrix component. It recognizes one or more domains within the alternatively spliced CS-1 region of fibronectin. Interactions involve the tripeptide L-D-T in MADCAM1, and L-D-V in fibronectin. Integrin ITGAE/ITGB7 (alpha-E/beta-7, HML-1) is a receptor for E-cadherin. This Mus musculus (Mouse) protein is Integrin beta-7 (Itgb7).